The sequence spans 485 residues: UDP-N-acetylmuramate--L-alanine ligase (485 aa).

125-131 contributes to the ATP binding site; the sequence is GTHGKTT.

This sequence belongs to the MurCDEF family.

Its subcellular location is the cytoplasm. The enzyme catalyses UDP-N-acetyl-alpha-D-muramate + L-alanine + ATP = UDP-N-acetyl-alpha-D-muramoyl-L-alanine + ADP + phosphate + H(+). The protein operates within cell wall biogenesis; peptidoglycan biosynthesis. In terms of biological role, cell wall formation. The protein is UDP-N-acetylmuramate--L-alanine ligase of Stutzerimonas stutzeri (strain A1501) (Pseudomonas stutzeri).